The primary structure comprises 486 residues: Retrograde regulation protein 3 (486 aa).

Positions 27–35 (ETLDFSLVT) match the 9aaTAD 1 motif. 2 stretches are compositionally biased toward polar residues: residues 75–94 (NNNL…TAST) and 101–130 (SQSS…IGQG). Residues 75-130 (NNNLMGSQARSNSQTPTASTIYEEAESQSSYLDDMFRTSQGGRPVTQNSISSIGQG) form a disordered region. Phosphoserine occurs at positions 81, 123, and 142. Position 150 is a phosphothreonine (T150). The 9aaTAD 2 motif lies at 189-197 (SSINSDMMT). A phosphoserine mark is found at S227, S236, and S241. The disordered stretch occupies residues 243–274 (RHGSINTPRTRHTSISSNMTENIGPGSVPKIL). Residues 246–263 (SINTPRTRHTSISSNMTE) are compositionally biased toward polar residues. Phosphoserine is present on S269. Positions 285–344 (RKREFHNAVERRRRELIKQKIKELGQLVPPSLLNYDDLGKQIKPNKGIILDRTVEYLQYL) constitute a bHLH domain. Residues 374–395 (ALSPFTNNHHASSGQNNSENSE) are disordered.

Binds DNA as a heterodimer with RTG1.

The protein localises to the nucleus. Functionally, transcription factor that regulates CIT2 gene expression. Binds to two identical sites oriented as inverted repeats 28 bp apart in a regulatory upstream activation sequence element (UASR) in the CIT2 promoter. The core binding site is 5'-GGTCAC-3'. This Saccharomyces cerevisiae (strain ATCC 204508 / S288c) (Baker's yeast) protein is Retrograde regulation protein 3 (RTG3).